Consider the following 372-residue polypeptide: 4-hydroxy-3-methylbut-2-en-1-yl diphosphate synthase (flavodoxin) (372 aa).

Positions 270, 273, 305, and 312 each coordinate [4Fe-4S] cluster.

It belongs to the IspG family. It depends on [4Fe-4S] cluster as a cofactor.

It catalyses the reaction (2E)-4-hydroxy-3-methylbut-2-enyl diphosphate + oxidized [flavodoxin] + H2O + 2 H(+) = 2-C-methyl-D-erythritol 2,4-cyclic diphosphate + reduced [flavodoxin]. It participates in isoprenoid biosynthesis; isopentenyl diphosphate biosynthesis via DXP pathway; isopentenyl diphosphate from 1-deoxy-D-xylulose 5-phosphate: step 5/6. In terms of biological role, converts 2C-methyl-D-erythritol 2,4-cyclodiphosphate (ME-2,4cPP) into 1-hydroxy-2-methyl-2-(E)-butenyl 4-diphosphate. This Vibrio vulnificus (strain CMCP6) protein is 4-hydroxy-3-methylbut-2-en-1-yl diphosphate synthase (flavodoxin).